Reading from the N-terminus, the 328-residue chain is DNA polymerase IV (328 aa).

A UmuC domain is found at Ile-6–Gly-187. Positions 10 and 105 each coordinate Mg(2+). Residue Glu-106 is part of the active site.

This sequence belongs to the DNA polymerase type-Y family. Monomer. The cofactor is Mg(2+).

The protein resides in the cytoplasm. The catalysed reaction is DNA(n) + a 2'-deoxyribonucleoside 5'-triphosphate = DNA(n+1) + diphosphate. Its function is as follows. Poorly processive, error-prone DNA polymerase involved in untargeted mutagenesis. Copies undamaged DNA at stalled replication forks, which arise in vivo from mismatched or misaligned primer ends. These misaligned primers can be extended by PolIV. Exhibits no 3'-5' exonuclease (proofreading) activity. May be involved in translesional synthesis, in conjunction with the beta clamp from PolIII. This Staphylococcus aureus (strain bovine RF122 / ET3-1) protein is DNA polymerase IV.